We begin with the raw amino-acid sequence, 713 residues long: Cadherin-13 (713 aa).

Positions 1-22 are cleaved as a signal peptide; it reads MQPATPLVLCVLLSQVLLLTSA. A propeptide spanning residues 23 to 138 is cleaved from the precursor; the sequence is EDLDCTPGFQ…RTSPVPRQKR (116 aa). N-linked (GlcNAc...) asparagine glycans are attached at residues asparagine 52 and asparagine 86. Cadherin domains follow at residues 139-245, 246-363, 364-477, 478-585, and 584-694; these read SIVV…RPIF, REGP…SPKF, TKKE…SPVF, YPDP…APFI, and FIYP…AAGA. The segment at 156-178 is disordered; that stretch reads PRDVGKVVDSDRPEGSKFRLTGK. A compositionally biased stretch (basic and acidic residues) spans 158-172; the sequence is DVGKVVDSDRPEGSK. N-linked (GlcNAc...) asparagine glycans are attached at residues asparagine 382, asparagine 489, asparagine 500, asparagine 530, asparagine 598, asparagine 638, and asparagine 671. The GPI-anchor amidated glycine moiety is linked to residue glycine 693. The propeptide at 694–713 is removed in mature form; the sequence is APHFSAATALLLSLFSLARL.

As to quaternary structure, by contrast to classical cadherins, homodimerization in trans is not mediated by cadherin EC1 domain strand-swapping, but instead through a homophilic adhesive interface which joins two elongated EC1-EC2 domains through a region near their Ca2+-binding sites to form a tetrahedral, X-like shape.

It localises to the cell membrane. The protein resides in the cytoplasm. Functionally, cadherins are calcium-dependent cell adhesion proteins. They preferentially interact with themselves in a homophilic manner in connecting cells; cadherins may thus contribute to the sorting of heterogeneous cell types. May act as a negative regulator of neural cell growth. The sequence is that of Cadherin-13 (CDH13) from Bos taurus (Bovine).